A 315-amino-acid chain; its full sequence is Fucose-specific lectin (315 aa).

6 repeat units span residues 2–53 (STPG…KNVI), 54–103 (GNAK…GGAK), 104–155 (FQVA…LGGA), 156–207 (LPGT…TIFD), 208–260 (RAPP…ITPV), and 261–315 (IQGS…LPPA). The interval 2 to 315 (STPGAQQVLF…QLGRSALPPA (314 aa)) is 6 X approximate tandem repeats. Alpha-L-fucose contacts are provided by Arg25, Glu37, Trp44, Arg73, Glu85, Trp94, Gly98, Arg126, Glu138, Trp146, Thr150, Arg177, Gln189, Trp198, Arg230, and Gln242. Zn(2+) is bound by residues Cys244, Asp246, and His252. Alpha-L-fucose contacts are provided by Arg282 and Glu296.

This sequence belongs to the fungal fucose-specific lectin family. Homodimer.

In terms of biological role, multispecific lectin that is able to recognize L-fucose in all possible linkages. These could be found not only in decomposed plant matter in soil, which is the natural environment for A.fumigatus, but also in various epitopes on human tissues. Mediates binding of A.fumigatus conidia to airway mucin in a fucose dependent manner. Stimulates IL-8 production by human bronchial cells in a dose-dependent manner, contributing to the inflammatory response observed upon the exposure of a patient to A.fumigatus, and thus might be an important virulence factor involved in an early stage of A.fumigatus infection. This chain is Fucose-specific lectin, found in Aspergillus fumigatus (strain ATCC MYA-4609 / CBS 101355 / FGSC A1100 / Af293) (Neosartorya fumigata).